A 503-amino-acid polypeptide reads, in one-letter code: Probable dolichyl pyrophosphate Man9GlcNAc2 alpha-1,3-glucosyltransferase (503 aa).

At 1–46 (MKERIKDKAWRPQFIKLNNPDTSKKIVSQKSKKPEIVDLSSPGNND) the chain is on the cytoplasmic side. A helical transmembrane segment spans residues 47–67 (LVTISILCVLLCFQLAISLNP). At 68-151 (HSGESQPPMY…SRGYESIAHK (84 aa)) the chain is on the lumenal side. The chain crosses the membrane as a helical span at residues 152–172 (LFMRLSAIIPFYIFYLPPLIF). Over 173–181 (YFTRSKKMS) the chain is Cytoplasmic. Residues 182 to 202 (PILYALALLYPSLLVIDNGHF) traverse the membrane as a helical segment. Residues 203–211 (QYNSISLGL) lie on the Lumenal side of the membrane. The helical transmembrane segment at 212-232 (FLATYMFLTKNFTIIGSILFV) threads the bilayer. Residues 233–239 (AALNYKQ) are Cytoplasmic-facing. Residues 240–257 (MELYHALPVFVFILARSI) traverse the membrane as a helical segment. Topologically, residues 258–268 (NKTQLFNSFRR) are lumenal. A helical membrane pass occupies residues 269–289 (ILTIGLFVVGTFLIIWLPFLL). Topologically, residues 290 to 332 (TGTAKDVIIRVFPFNRGLYEDKVASFWCAFSFILKRLPLQSVQ) are cytoplasmic. Residues 333-353 (IYISTALVLAGSAPSLLVLFL) form a helical membrane-spanning segment. The Lumenal portion of the chain corresponds to 354-359 (RPTEKQ). The chain crosses the membrane as a helical span at residues 360-379 (FRISLTATGLSFFLFSFHVH). Over 380–382 (EKT) the chain is Cytoplasmic. Residues 383–403 (ILLAAVPALLLISEYTSLVIW) form a helical membrane-spanning segment. Topologically, residues 404-420 (FLNITNISIFSLCVKDN) are lumenal. Residues 421 to 441 (FALSLSFFFAYFVVSYAYTAP) traverse the membrane as a helical segment. The Cytoplasmic segment spans residues 442 to 443 (RK). A helical membrane pass occupies residues 444–464 (ISHILTILIGFAICILELYGP). Residues 465–474 (SNQRFPHIYQ) are Lumenal-facing. A helical membrane pass occupies residues 475–495 (LANAFFSCVHFIYFLLYLSFA). Over 496–503 (SFEKTKKE) the chain is Cytoplasmic.

The protein belongs to the ALG6/ALG8 glucosyltransferase family.

It is found in the endoplasmic reticulum membrane. It catalyses the reaction an alpha-D-Man-(1-&gt;2)-alpha-D-Man-(1-&gt;2)-alpha-D-Man-(1-&gt;3)-[alpha-D-Man-(1-&gt;2)-alpha-D-Man-(1-&gt;3)-[alpha-D-Man-(1-&gt;2)-alpha-D-Man-(1-&gt;6)]-alpha-D-Man-(1-&gt;6)]-beta-D-Man-(1-&gt;4)-beta-D-GlcNAc-(1-&gt;4)-alpha-D-GlcNAc-diphospho-di-trans,poly-cis-dolichol + a di-trans,poly-cis-dolichyl beta-D-glucosyl phosphate = an alpha-D-Glc-(1-&gt;3)-alpha-D-Man-(1-&gt;2)-alpha-D-Man-(1-&gt;2)-alpha-D-Man-(1-&gt;3)-[alpha-D-Man-(1-&gt;2)-alpha-D-Man-(1-&gt;3)-[alpha-D-Man-(1-&gt;2)-alpha-D-Man-(1-&gt;6)]-alpha-D-Man-(1-&gt;6)]-beta-D-Man-(1-&gt;4)-beta-D-GlcNAc-(1-&gt;4)-alpha-D-GlcNAc-diphospho-di-trans,poly-cis-dolichol + a di-trans,poly-cis-dolichyl phosphate + H(+). The protein operates within protein modification; protein glycosylation. Its function is as follows. Adds the first glucose residue to the lipid-linked oligosaccharide precursor for N-linked glycosylation. Transfers glucose from dolichyl phosphate glucose (Dol-P-Glc) onto the lipid-linked oligosaccharide Man(9)GlcNAc(2)-PP-Dol. In Caenorhabditis elegans, this protein is Probable dolichyl pyrophosphate Man9GlcNAc2 alpha-1,3-glucosyltransferase.